A 682-amino-acid polypeptide reads, in one-letter code: Heat shock 70 kDa protein 10, mitochondrial (682 aa).

A mitochondrion-targeting transit peptide spans 1–50; it reads MATAALLRSIRRREVVSSPFSAYRCLSSSGKASLNSSYLGQNFRSFSRAF. The segment at 646–682 is disordered; that stretch reads KIGEHMSGGSGGGSAPGGGSEGGSDQAPEAEYEEVKK. The segment covering 651–667 has biased composition (gly residues); it reads MSGGSGGGSAPGGGSEG. The span at 673–682 shows a compositional bias: acidic residues; that stretch reads PEAEYEEVKK.

This sequence belongs to the heat shock protein 70 (TC 1.A.33) family. DnaK subfamily.

The protein localises to the mitochondrion. In terms of biological role, chaperone involved in the maturation of iron-sulfur [Fe-S] cluster-containing proteins. Has a low intrinsic ATPase activity which is markedly stimulated by HSCB and ISU1. In cooperation with other chaperones, Hsp70s are key components that facilitate folding of de novo synthesized proteins, assist translocation of precursor proteins into organelles, and are responsible for degradation of damaged protein under stress conditions. The chain is Heat shock 70 kDa protein 10, mitochondrial from Arabidopsis thaliana (Mouse-ear cress).